Reading from the N-terminus, the 428-residue chain is Tyrosine--tRNA ligase (428 aa).

Tyrosine 41 contacts L-tyrosine. A 'HIGH' region motif is present at residues 46 to 55 (PTADSLHLGH). Residues tyrosine 179 and glutamine 183 each contribute to the L-tyrosine site. A 'KMSKS' region motif is present at residues 239–243 (KFGKT). Lysine 242 is a binding site for ATP. One can recognise an S4 RNA-binding domain in the interval 361 to 418 (ADLMQALVDSELQPSRGQARKTIASNAVTINGEKQSDPEYFFQDSDILFGRYTLLRRG).

The protein belongs to the class-I aminoacyl-tRNA synthetase family. TyrS type 1 subfamily. In terms of assembly, homodimer.

The protein localises to the cytoplasm. The catalysed reaction is tRNA(Tyr) + L-tyrosine + ATP = L-tyrosyl-tRNA(Tyr) + AMP + diphosphate + H(+). Its function is as follows. Catalyzes the attachment of tyrosine to tRNA(Tyr) in a two-step reaction: tyrosine is first activated by ATP to form Tyr-AMP and then transferred to the acceptor end of tRNA(Tyr). The chain is Tyrosine--tRNA ligase from Citrobacter koseri (strain ATCC BAA-895 / CDC 4225-83 / SGSC4696).